Consider the following 604-residue polypeptide: Elongation factor 4 1 (604 aa).

Residues Glu-10–Thr-191 enclose the tr-type G domain. GTP contacts are provided by residues Asp-22–Thr-27 and Asn-138–Asp-141.

Belongs to the TRAFAC class translation factor GTPase superfamily. Classic translation factor GTPase family. LepA subfamily.

Its subcellular location is the cell inner membrane. It catalyses the reaction GTP + H2O = GDP + phosphate + H(+). Required for accurate and efficient protein synthesis under certain stress conditions. May act as a fidelity factor of the translation reaction, by catalyzing a one-codon backward translocation of tRNAs on improperly translocated ribosomes. Back-translocation proceeds from a post-translocation (POST) complex to a pre-translocation (PRE) complex, thus giving elongation factor G a second chance to translocate the tRNAs correctly. Binds to ribosomes in a GTP-dependent manner. The chain is Elongation factor 4 1 from Rhodopirellula baltica (strain DSM 10527 / NCIMB 13988 / SH1).